Here is a 330-residue protein sequence, read N- to C-terminus: Methionyl-tRNA formyltransferase (330 aa).

121-124 (SLLP) contacts (6S)-5,6,7,8-tetrahydrofolate.

Belongs to the Fmt family.

It carries out the reaction L-methionyl-tRNA(fMet) + (6R)-10-formyltetrahydrofolate = N-formyl-L-methionyl-tRNA(fMet) + (6S)-5,6,7,8-tetrahydrofolate + H(+). Its function is as follows. Attaches a formyl group to the free amino group of methionyl-tRNA(fMet). The formyl group appears to play a dual role in the initiator identity of N-formylmethionyl-tRNA by promoting its recognition by IF2 and preventing the misappropriation of this tRNA by the elongation apparatus. The chain is Methionyl-tRNA formyltransferase from Burkholderia cenocepacia (strain HI2424).